Reading from the N-terminus, the 146-residue chain is Large ribosomal subunit protein uL16 (146 aa).

This sequence belongs to the universal ribosomal protein uL16 family. As to quaternary structure, part of the 50S ribosomal subunit.

Binds 23S rRNA and is also seen to make contacts with the A and possibly P site tRNAs. The chain is Large ribosomal subunit protein uL16 from Thermomicrobium roseum (strain ATCC 27502 / DSM 5159 / P-2).